The sequence spans 309 residues: MKIAVLMGGPSSEREISLKSGSAVAAALSGLGHQVITIDLNREVVARLKNFAPDVVFNALHGKPGEDGSVQGLLEVLGLPYTGSRVLASAITMDKIMTKRVLLQAGIPTPKFLAWTGAEYATGKKEIKAAILKELGLPVVIKAPTQGSTIGTFIVREEGELEPAIAGALKYDLSFMAEAYLAGPEITAAVLGNRKPQVLPLIEIVSHTGFYDYQAKYTPGLSDHIIPPRLPDDVLAAATSLAGRTYALLGCRGFARVDFIVAGGREPQVIEVNSVPGMTATSLVPDAARAAGLDFPDLVQKIVDLALEP.

The ATP-grasp domain occupies 99–304; it reads KRVLLQAGIP…FPDLVQKIVD (206 aa). 132–187 is a binding site for ATP; that stretch reads LKELGLPVVIKAPTQGSTIGTFIVREEGELEPAIAGALKYDLSFMAEAYLAGPEIT. Mg(2+) contacts are provided by Asp-258, Glu-271, and Asn-273.

This sequence belongs to the D-alanine--D-alanine ligase family. The cofactor is Mg(2+). Requires Mn(2+) as cofactor.

Its subcellular location is the cytoplasm. It catalyses the reaction 2 D-alanine + ATP = D-alanyl-D-alanine + ADP + phosphate + H(+). It participates in cell wall biogenesis; peptidoglycan biosynthesis. Its function is as follows. Cell wall formation. This is D-alanine--D-alanine ligase from Moorella thermoacetica (strain ATCC 39073 / JCM 9320).